The primary structure comprises 87 residues: MVNMKASMFLTFAGLVLLFVVCYASESEEKEFPKEMLSSIFAVDNDFKQEERDCAGYMRECNEKLCCSGYVCSSRWKWCVLPAPWRR.

The N-terminal stretch at 1–24 (MVNMKASMFLTFAGLVLLFVVCYA) is a signal peptide. The propeptide occupies 25–52 (SESEEKEFPKEMLSSIFAVDNDFKQEER). Disulfide bonds link Cys-54–Cys-67, Cys-61–Cys-72, and Cys-66–Cys-79.

This sequence belongs to the neurotoxin 10 (Hwtx-1) family. 51 (Hntx-8) subfamily. Hntx-8 sub-subfamily. As to expression, expressed by the venom gland.

It localises to the secreted. Ion channel inhibitor. The polypeptide is U3-theraphotoxin-Hhn1p (Cyriopagopus hainanus (Chinese bird spider)).